We begin with the raw amino-acid sequence, 499 residues long: Heparin cofactor 2 (499 aa).

Positions 1-19 (MKHSLNALLIFLIITSAWG) are cleaved as a signal peptide. Serine 37 is modified (phosphoserine; by FAM20C). N-linked (GlcNAc...) (complex) asparagine glycosylation occurs at asparagine 49. Residues 68-79 (DWIPEGEEDDDY) form a chemotactic activity region. Tandem repeats lie at residues 73–83 (GEEDDDYLDLE) and 87–97 (SEDDDYIDIVD). Residues 73 to 97 (GEEDDDYLDLEKIFSEDDDYIDIVD) are 2 X 11 AA approximate repeats, Asp/Glu-rich (acidic) (hirudin-like). Sulfotyrosine is present on residues tyrosine 79 and tyrosine 92. Asparagine 188 is a glycosylation site (N-linked (GlcNAc...) asparagine). The tract at residues 192–212 (KYEITTIHNLFRKLTHRLFRR) is glycosaminoglycan-binding site. N-linked (GlcNAc...) asparagine glycosylation occurs at asparagine 387.

Belongs to the serpin family. Phosphorylated by FAM20C in the extracellular medium. Expressed predominantly in liver. Also present in plasma. In terms of tissue distribution, expressed in plasma (at protein level). Expressed in liver.

In terms of biological role, thrombin inhibitor activated by the glycosaminoglycans, heparin or dermatan sulfate. In the presence of the latter, HC-II becomes the predominant thrombin inhibitor in place of antithrombin III (AT-III). Also inhibits chymotrypsin, but in a glycosaminoglycan-independent manner. Functionally, peptides at the N-terminal of HC-II have chemotactic activity for both monocytes and neutrophils. Its function is as follows. Shows negligible inhibition, in vitro, of thrombin and tPA and no inhibition of factor Xa, in vitro. In Homo sapiens (Human), this protein is Heparin cofactor 2 (SERPIND1).